Consider the following 204-residue polypeptide: MIGRLQGILLEKQPPEILLNVQGVGYELLLPMTSFYDLPEIGQETTLFTHLVVREDAHLLFGFAQKTDRTLFRELIKTNGVGPKLALAILSAMSVEQFAYAIEREELSKLTKIPGVGKKTAERLLVELKGKFKGVKQSDFFVESTHIPLSPSIESHSESSSDEAISALIALGYKPAEAEKMVKRVAKPELTSEQVIREALKAAL.

The tract at residues 1-64 is domain I; that stretch reads MIGRLQGILL…EDAHLLFGFA (64 aa). The domain II stretch occupies residues 65 to 143; sequence QKTDRTLFRE…GVKQSDFFVE (79 aa). The flexible linker stretch occupies residues 144-155; that stretch reads STHIPLSPSIES. Residues 156 to 204 form a domain III region; the sequence is HSESSSDEAISALIALGYKPAEAEKMVKRVAKPELTSEQVIREALKAAL.

Belongs to the RuvA family. As to quaternary structure, homotetramer. Forms an RuvA(8)-RuvB(12)-Holliday junction (HJ) complex. HJ DNA is sandwiched between 2 RuvA tetramers; dsDNA enters through RuvA and exits via RuvB. An RuvB hexamer assembles on each DNA strand where it exits the tetramer. Each RuvB hexamer is contacted by two RuvA subunits (via domain III) on 2 adjacent RuvB subunits; this complex drives branch migration. In the full resolvosome a probable DNA-RuvA(4)-RuvB(12)-RuvC(2) complex forms which resolves the HJ.

It is found in the cytoplasm. The RuvA-RuvB-RuvC complex processes Holliday junction (HJ) DNA during genetic recombination and DNA repair, while the RuvA-RuvB complex plays an important role in the rescue of blocked DNA replication forks via replication fork reversal (RFR). RuvA specifically binds to HJ cruciform DNA, conferring on it an open structure. The RuvB hexamer acts as an ATP-dependent pump, pulling dsDNA into and through the RuvAB complex. HJ branch migration allows RuvC to scan DNA until it finds its consensus sequence, where it cleaves and resolves the cruciform DNA. The chain is Holliday junction branch migration complex subunit RuvA from Haemophilus influenzae (strain PittGG).